The sequence spans 584 residues: POTE ankyrin domain family member D (584 aa).

ANK repeat units lie at residues 172 to 201 (EKRTALHLASANGNSEVVQLLLDRRCQLNV), 205 to 234 (KKRTALIKAIQCQEDECVLMLLEHGADRNI), 238 to 267 (YGNTALHYAIYNEDKLMAKALLLYGADIES), 271 to 300 (CGLTPLLLGVHEQKQQVVKFLIKKKANLNV), 304 to 333 (YGRTALILAVCCGSASIVNLLLEQNVDVSS), and 337 to 366 (SGQTAREYAVSSHHHVICELLSDYKEKQML). Residues 369-502 (SSENSNPEQD…ILTNKQKQIE (134 aa)) form a disordered region. Composition is skewed to basic and acidic residues over residues 377–392 (QDLKLTSEEESQRLKV), 401–412 (MSQEPEINKDCD), and 466–481 (EEYHSDEQNDTRKQLS). Residues 482–498 (EEQNTGISQDEILTNKQ) are compositionally biased toward polar residues. A coiled-coil region spans residues 494–583 (LTNKQKQIEV…LNEEALTKTN (90 aa)).

The protein belongs to the POTE family. Expressed in prostate, ovary, testis, placenta and prostate cancer cell lines. Localizes to basal and terminal prostate epithelial cells.

The protein resides in the cell membrane. This Homo sapiens (Human) protein is POTE ankyrin domain family member D (POTED).